Reading from the N-terminus, the 320-residue chain is Aspartate carbamoyltransferase catalytic subunit (320 aa).

Residues Arg68 and Thr69 each coordinate carbamoyl phosphate. Lys96 lines the L-aspartate pocket. 3 residues coordinate carbamoyl phosphate: Arg118, His148, and Gln151. Arg181 and Arg236 together coordinate L-aspartate. Carbamoyl phosphate contacts are provided by Gly277 and Pro278.

It belongs to the aspartate/ornithine carbamoyltransferase superfamily. ATCase family. In terms of assembly, heterododecamer (2C3:3R2) of six catalytic PyrB chains organized as two trimers (C3), and six regulatory PyrI chains organized as three dimers (R2).

It catalyses the reaction carbamoyl phosphate + L-aspartate = N-carbamoyl-L-aspartate + phosphate + H(+). It functions in the pathway pyrimidine metabolism; UMP biosynthesis via de novo pathway; (S)-dihydroorotate from bicarbonate: step 2/3. In terms of biological role, catalyzes the condensation of carbamoyl phosphate and aspartate to form carbamoyl aspartate and inorganic phosphate, the committed step in the de novo pyrimidine nucleotide biosynthesis pathway. The sequence is that of Aspartate carbamoyltransferase catalytic subunit from Leptothrix cholodnii (strain ATCC 51168 / LMG 8142 / SP-6) (Leptothrix discophora (strain SP-6)).